The sequence spans 639 residues: Chaperone protein DnaK (639 aa).

Residue threonine 198 is modified to Phosphothreonine; by autocatalysis. The interval 604–639 (KSQAQGGDNADAGKQANAAADDVVDAEFEEVKDDKK) is disordered. The segment covering 606–624 (QAQGGDNADAGKQANAAAD) has biased composition (low complexity). Residues 625–639 (DVVDAEFEEVKDDKK) are compositionally biased toward acidic residues.

The protein belongs to the heat shock protein 70 family.

In terms of biological role, acts as a chaperone. The chain is Chaperone protein DnaK from Shewanella baltica (strain OS223).